Reading from the N-terminus, the 372-residue chain is MAPSELNCTHQNQHSSGYDGPRSRVTVVGSGNWGSVAAKLIATNTLKLPSFHDEVRMWVFEETLPSGEKLTDVINQTNENVKYLPGIKLGRNVVADPDLENAVKDANMLVFVTPHQFMEGICKRLEGKIQEGAQALSLIKGMEVKMEGPCMISSLISDLLGINCCVLMGANIANEIAVEKFSEATVGFRENRDIAEKWVQLFSTPYFMVSAVEDVEGVELCGTLKNIVAIAAGFVDGLEMGNNTKAAIMRIGLREMKAFSKLLFPSVKDTTFFESCGVADLITTCLGGRNRKVAEAFAKNGGKRSFDDLEAEMLRGQKLQGVSTAKEVYEVLGHRGWLELFPLFSTVHEISTGRLPPSAIVEYSEQKTIFSW.

Residues Met1–Ser16 are compositionally biased toward polar residues. Residues Met1 to Ser23 form a disordered region. Residues Gly29–Gly34, Phe60, Phe117, Lys140, and Ala173 contribute to the NAD(+) site. Lys140 provides a ligand contact to substrate. Lys225 (proton acceptor) is an active-site residue. Residues Arg289, Lys318, and Gln320 each contribute to the NAD(+) site. Arg289–Asn290 contributes to the substrate binding site.

Belongs to the NAD-dependent glycerol-3-phosphate dehydrogenase family.

It catalyses the reaction sn-glycerol 3-phosphate + NAD(+) = dihydroxyacetone phosphate + NADH + H(+). The chain is Glycerol-3-phosphate dehydrogenase [NAD(+)] (GPDH) from Cuphea lanceolata (Cigar flower).